A 398-amino-acid polypeptide reads, in one-letter code: Galactose-3-O-sulfotransferase 2 (398 aa).

At 1–10 (MMSMLGGLQR) the chain is on the cytoplasmic side. A helical; Signal-anchor for type II membrane protein transmembrane segment spans residues 11-31 (YFRVILLLLLALTLLLLAGFL). The Lumenal portion of the chain corresponds to 32-398 (HSDLELDTPL…PLKNIPFLGA (367 aa)). 6 N-linked (GlcNAc...) asparagine glycosylation sites follow: N79, N132, N179, N287, N330, and N360.

This sequence belongs to the galactose-3-O-sulfotransferase family. In terms of tissue distribution, ubiquitous. Detected in heart, stomach, colon, liver and spleen, in epithelial cells lining the lower to middle layer of the crypts in colonic mucosa, hepatocytes surrounding the central vein of the liver, extravillous cytotrophoblasts in the basal plate of the septum of the placenta, renal tubules of the kidney, and neuronal cells of the cerebral cortex.

It localises to the golgi apparatus. Its subcellular location is the golgi stack membrane. It participates in protein modification; carbohydrate sulfation. With respect to regulation, strongly inhibited by Cu(2+) and Zn(2+). Its function is as follows. Transfers a sulfate group to the hydroxyl group at C3 of non-reducing beta-galactosyl residues. Acts both on type 1 (Gal-beta-1,3-GlcNAc) and type 2 (Gal-beta-1,4-GlcNAc) chains with similar efficiency. This chain is Galactose-3-O-sulfotransferase 2 (GAL3ST2), found in Homo sapiens (Human).